The primary structure comprises 240 residues: UDP-2,3-diacylglucosamine hydrolase (240 aa).

Mn(2+)-binding residues include Asp8, His10, Asp41, Asn79, and His114. Residue 79–80 (NR) coordinates substrate. Substrate is bound by residues Asp122, Ser160, Asn164, Lys167, and His195. Mn(2+)-binding residues include His195 and His197.

Belongs to the LpxH family. Mn(2+) is required as a cofactor.

Its subcellular location is the cell inner membrane. It carries out the reaction UDP-2-N,3-O-bis[(3R)-3-hydroxytetradecanoyl]-alpha-D-glucosamine + H2O = 2-N,3-O-bis[(3R)-3-hydroxytetradecanoyl]-alpha-D-glucosaminyl 1-phosphate + UMP + 2 H(+). It participates in glycolipid biosynthesis; lipid IV(A) biosynthesis; lipid IV(A) from (3R)-3-hydroxytetradecanoyl-[acyl-carrier-protein] and UDP-N-acetyl-alpha-D-glucosamine: step 4/6. Its function is as follows. Hydrolyzes the pyrophosphate bond of UDP-2,3-diacylglucosamine to yield 2,3-diacylglucosamine 1-phosphate (lipid X) and UMP by catalyzing the attack of water at the alpha-P atom. Involved in the biosynthesis of lipid A, a phosphorylated glycolipid that anchors the lipopolysaccharide to the outer membrane of the cell. The polypeptide is UDP-2,3-diacylglucosamine hydrolase (Klebsiella pneumoniae subsp. pneumoniae (strain ATCC 700721 / MGH 78578)).